We begin with the raw amino-acid sequence, 419 residues long: S-adenosylmethionine synthase (419 aa).

His15 lines the ATP pocket. Residue Asp17 coordinates Mg(2+). Glu43 is a binding site for K(+). Residues Glu56 and Gln100 each coordinate L-methionine. The flexible loop stretch occupies residues 100–110 (QSPDIAQGVDE). ATP-binding positions include 171 to 173 (DGK), 248 to 249 (KF), Asp257, 263 to 264 (RK), Ala280, and Lys284. An L-methionine-binding site is contributed by Asp257. Lys288 is a binding site for L-methionine.

Belongs to the AdoMet synthase family. As to quaternary structure, homotetramer; dimer of dimers. The cofactor is Mg(2+). Requires K(+) as cofactor.

It localises to the cytoplasm. It carries out the reaction L-methionine + ATP + H2O = S-adenosyl-L-methionine + phosphate + diphosphate. It participates in amino-acid biosynthesis; S-adenosyl-L-methionine biosynthesis; S-adenosyl-L-methionine from L-methionine: step 1/1. Its function is as follows. Catalyzes the formation of S-adenosylmethionine (AdoMet) from methionine and ATP. The overall synthetic reaction is composed of two sequential steps, AdoMet formation and the subsequent tripolyphosphate hydrolysis which occurs prior to release of AdoMet from the enzyme. The chain is S-adenosylmethionine synthase from Synechococcus sp. (strain CC9311).